The sequence spans 370 residues: DNA replication and repair protein RecF (370 aa).

Position 30–37 (30–37) interacts with ATP; the sequence is GENAQGKT.

The protein belongs to the RecF family.

The protein resides in the cytoplasm. The RecF protein is involved in DNA metabolism; it is required for DNA replication and normal SOS inducibility. RecF binds preferentially to single-stranded, linear DNA. It also seems to bind ATP. This Staphylococcus carnosus (strain TM300) protein is DNA replication and repair protein RecF.